Reading from the N-terminus, the 84-residue chain is Small ribosomal subunit protein uS17 (84 aa).

Belongs to the universal ribosomal protein uS17 family. Part of the 30S ribosomal subunit.

In terms of biological role, one of the primary rRNA binding proteins, it binds specifically to the 5'-end of 16S ribosomal RNA. The protein is Small ribosomal subunit protein uS17 of Clostridium novyi (strain NT).